The following is a 297-amino-acid chain: Beta-glucoside kinase (297 aa).

Position 5 to 11 (5 to 11 (AFDIGGT)) interacts with ATP.

Belongs to the ROK (NagC/XylR) family. As to quaternary structure, homotetramer.

It catalyses the reaction D-cellobiose + ATP = 6-phospho-beta-D-glucosyl-(1-&gt;4)-D-glucose + ADP + H(+). Its activity is regulated as follows. Is inhibited by N-ethylmaleimide in vitro, but ATP affords considerable protection against the inhibitor. Functionally, catalyzes the ATP-dependent phosphorylation of a wide variety of beta-D-glucosides, to produce 6-phospho-beta-D-glucosides including cellobiose-6'-P, gentiobiose-6'-P, cellobiitol-6-P, salicin-6-P, and arbutin-6-P. Is not able to phosphorylate alpha-D-glucosides. May have a dual role of kinase and transcriptional regulator of the cellobiose-PTS operon. In Klebsiella pneumoniae, this protein is Beta-glucoside kinase (bglK).